The following is a 357-amino-acid chain: Histidine biosynthesis bifunctional protein HisB (357 aa).

Residues 1–168 (MTPILFIDRD…GIAHALADAP (168 aa)) are histidinol-phosphatase. The active-site Nucleophile is Asp8. Residues Asp8, Asp10, and Asp128 each coordinate Mg(2+). Asp10 functions as the Proton donor in the catalytic mechanism. The imidazoleglycerol-phosphate dehydratase stretch occupies residues 169–357 (RIAVVQRDTK…TALPTTKGAL (189 aa)).

It in the N-terminal section; belongs to the histidinol-phosphatase family. This sequence in the C-terminal section; belongs to the imidazoleglycerol-phosphate dehydratase family. Mg(2+) is required as a cofactor.

It is found in the cytoplasm. It catalyses the reaction D-erythro-1-(imidazol-4-yl)glycerol 3-phosphate = 3-(imidazol-4-yl)-2-oxopropyl phosphate + H2O. The enzyme catalyses L-histidinol phosphate + H2O = L-histidinol + phosphate. The protein operates within amino-acid biosynthesis; L-histidine biosynthesis; L-histidine from 5-phospho-alpha-D-ribose 1-diphosphate: step 6/9. It participates in amino-acid biosynthesis; L-histidine biosynthesis; L-histidine from 5-phospho-alpha-D-ribose 1-diphosphate: step 8/9. The chain is Histidine biosynthesis bifunctional protein HisB from Stenotrophomonas maltophilia (strain R551-3).